Consider the following 591-residue polypeptide: V-type ATP synthase alpha chain (591 aa).

233 to 240 (GPFGAGKT) provides a ligand contact to ATP.

This sequence belongs to the ATPase alpha/beta chains family.

It catalyses the reaction ATP + H2O + 4 H(+)(in) = ADP + phosphate + 5 H(+)(out). In terms of biological role, produces ATP from ADP in the presence of a proton gradient across the membrane. The V-type alpha chain is a catalytic subunit. This chain is V-type ATP synthase alpha chain, found in Streptococcus pyogenes serotype M28 (strain MGAS6180).